The chain runs to 362 residues: Heat-inducible transcription repressor HrcA (362 aa).

It belongs to the HrcA family.

In terms of biological role, negative regulator of class I heat shock genes (grpE-dnaK-dnaJ and groELS operons). Prevents heat-shock induction of these operons. The chain is Heat-inducible transcription repressor HrcA from Rhodopseudomonas palustris (strain BisB18).